Reading from the N-terminus, the 511-residue chain is Sodium/proline symporter 2 (511 aa).

The next 13 membrane-spanning stretches (helical) occupy residues 16-36, 54-74, 85-105, 139-159, 175-195, 204-224, 246-266, 286-306, 327-347, 381-401, 410-430, 438-458, and 467-487; these read WQTYIMIIIYFTILLFIGYYG, IGPYVTALSAGASDMSGWMIM, LSAMWITIGLSLGAYVNYFVV, IISGLIIVVFFTLYTHSGFVS, GLLMVAFIVIFYTFFGGYLAV, VIMLIAMVMVPIVALIDLNGI, VLGIISLFAWGLGYFGQPHII, ISWMVIGLLGAVAVGLTGIAF, ILFHPLVGGFLLAAILAAIMS, FLMVGRLSVLIVAIVAIWIAW, LVGNAWAGFGAAFSPLVIFSL, TGALAGMITGALVVIIWIVWI, and LFGMYEIIPGFLASVITTYFV.

This sequence belongs to the sodium:solute symporter (SSF) (TC 2.A.21) family.

The protein localises to the cell membrane. It carries out the reaction L-proline(in) + Na(+)(in) = L-proline(out) + Na(+)(out). Functionally, catalyzes the sodium-dependent uptake of extracellular L-proline. The protein is Sodium/proline symporter 2 (putP2) of Staphylococcus saprophyticus subsp. saprophyticus (strain ATCC 15305 / DSM 20229 / NCIMB 8711 / NCTC 7292 / S-41).